A 267-amino-acid chain; its full sequence is Chlorophyll a-b binding protein 3A, chloroplastic (267 aa).

Residues 1 to 34 (MAASTMALSSSTFAGKTVKLAPSSSEITGNGRIT) constitute a chloroplast transit peptide. A helical membrane pass occupies residues 153 to 173 (LVHAQSILAIWACQVVLMGAV). Chlorophyll b-binding residues include Val-154, Ser-158, Gln-166, Glu-174, Arg-177, and Leu-183. Residues Lys-214, Glu-215, Asn-218, Arg-220, Gln-232, His-247, and Ala-256 each contribute to the chlorophyll a site. The chain crosses the membrane as a helical span at residues 221–241 (LAMFSMFGFFVQAIVTGKGPL). Position 263 (Phe-263) interacts with chlorophyll b.

Belongs to the light-harvesting chlorophyll a/b-binding (LHC) protein family. In terms of assembly, the LHC complex consists of chlorophyll a-b binding proteins. Requires Binds at least 14 chlorophylls (8 Chl-a and 6 Chl-b) and carotenoids such as lutein and neoxanthin. as cofactor. Post-translationally, photoregulated by reversible phosphorylation of its threonine residues.

It localises to the plastid. Its subcellular location is the chloroplast thylakoid membrane. Its function is as follows. The light-harvesting complex (LHC) functions as a light receptor, it captures and delivers excitation energy to photosystems with which it is closely associated. This chain is Chlorophyll a-b binding protein 3A, chloroplastic (CAB3A), found in Solanum lycopersicum (Tomato).